Consider the following 1235-residue polypeptide: MSFFNFRKIFKLGSEKKKKQYEHVKRDLNPEDFWEIIGELGDGAFGKVYKAQNKETSVLAAAKVIDTKSEEELEDYMVEIDILASCDHPNIVKLLDAFYYENNLWILIEFCAGGAVDAVMLELERPLTESQIQVVCKQTLDALNYLHDNKIIHRDLKAGNILFTLDGDIKLADFGVSAKNTRTIQRRDSFIGTPYWMAPEVVMCETSKDRPYDYKADVWSLGITLIEMAEIEPPHHELNPMRVLLKIAKSEPPTLAQPSRWSSNFKDFLKKCLEKNVDARWTTSQLLQHPFVTVDSNKPIRELIAEAKAEVTEEVEDGKEEDEEEETENSLPIPASKRASSDLSIASSEEDKLSQNACILESVSEKTERSNSEDKLNSKILNEKPTTDEPEKAVEDINEHITDAQLEAMTELHDRTAVIKENEREKRPKLENLPDTEDQETVDINSVSEGKENNIMITLETNIEHNLKSEEEKDQEKQQMFENKLIKSEEIKDTILQTVDLVSQETGEKEANIQAVDSEVGLTKEDTQEKLGEDDKTQKDVISNTSDVIGTCEAADVAQKVDEDSAEDTQSNDGKEVVEVGQKLINKPMVGPEAGGTKEVPIKEIVEMNEIEEGKNKEQAINSSENIMDINEEPGTTEGEEITESSSTEEMEVRSVVADTDQKALGSEVQDASKVTTQIDKEKKEIPVSIKKEPEVTVVSQPTEPQPVLIPSININSDSGENKEEIGSLSKTETILPPESENPKENDNDSGTGSTADTSSIDLNLSISSFLSKTKDSGSISLQETRRQKKTLKKTRKFIVDGVEVSVTTSKIVTDSDSKTEELRFLRRQELRELRFLQKEEQRAQQQLNSKLQQQREQIFRRFEQEMMSKKRQYDQEIENLEKQQKQTIERLEQEHTNRLRDEAKRIKGEQEKELSKFQNMLKNRKKEVINEVEKAPKELRKELMKRRKEELAQSQHAQEQEFVQKQQQELDGSLKKIIQQQKAELANIERECLNNKQQLMRAREAAIWELEERHLQEKHQLLKQQLKDQYFMQRHQLLKRHEKETEQMQRYNQRLIEELKNRQTQERARLPKIQRSEAKTRMAMFKKSLRINSTATPDQDRDKIKQFAAQEEKRQKNERMAQHQKHENQMRDLQLQCEANVRELHQLQNEKCHLLVEHETQKLKELDEEHSQELKEWREKLRPRKKTLEEEFARKLQEQEVFFKMTGESECLNPSTQSRISKFYPIPSLHSTGS.

Residue Ser14 is modified to Phosphoserine. A Protein kinase domain is found at 34–292; the sequence is WEIIGELGDG…TSQLLQHPFV (259 aa). ATP is bound by residues 40-48 and Lys63; that span reads LGDGAFGKV. The active-site Proton acceptor is the Asp155. The residue at position 183 (Thr183) is a Phosphothreonine. At Ser189 the chain carries Phosphoserine. The segment at 309–351 is disordered; it reads AEVTEEVEDGKEEDEEEETENSLPIPASKRASSDLSIASSEED. A compositionally biased stretch (acidic residues) spans 312-328; that stretch reads TEEVEDGKEEDEEEETE. 8 positions are modified to phosphoserine: Ser330, Ser340, Ser341, Ser344, Ser347, Ser348, Ser354, and Ser372. Disordered regions lie at residues 363-393 and 421-441; these read VSEK…PEKA and ENER…DQET. Positions 421–432 are enriched in basic and acidic residues; the sequence is ENEREKRPKLEN. The residue at position 518 (Ser518) is a Phosphoserine. The segment at 519–539 is disordered; the sequence is EVGLTKEDTQEKLGEDDKTQK. Residues 522 to 539 show a composition bias toward basic and acidic residues; that stretch reads LTKEDTQEKLGEDDKTQK. Phosphoserine is present on Ser565. Thr569 bears the Phosphothreonine mark. Phosphoserine is present on residues Ser571, Ser647, Ser655, and Ser667. The interval 613–760 is disordered; sequence EGKNKEQAIN…GTGSTADTSS (148 aa). Positions 638 to 650 are enriched in acidic residues; sequence EGEEITESSSTEE. Positions 679 to 695 are enriched in basic and acidic residues; the sequence is IDKEKKEIPVSIKKEPE. Residues 749 to 760 show a composition bias toward low complexity; it reads DSGTGSTADTSS. Ser777 and Ser779 each carry phosphoserine. Thr814 carries the post-translational modification Phosphothreonine. Ser818 carries the post-translational modification Phosphoserine. A coiled-coil region spans residues 826-1069; the sequence is LRRQELRELR…LKNRQTQERA (244 aa). One can recognise a UVR domain in the interval 875–910; the sequence is DQEIENLEKQQKQTIERLEQEHTNRLRDEAKRIKGE. Thr1097 carries the post-translational modification Phosphothreonine. Residues 1109 to 1183 adopt a coiled-coil conformation; that stretch reads AAQEEKRQKN…ELKEWREKLR (75 aa).

This sequence belongs to the protein kinase superfamily. STE Ser/Thr protein kinase family. STE20 subfamily. Post-translationally, proteolytically cleaved by caspase-3. Autophosphorylated. In terms of tissue distribution, ubiquitously expressed. Highest expression is found in heart and in skeletal muscle.

The protein localises to the cytoplasm. It carries out the reaction L-seryl-[protein] + ATP = O-phospho-L-seryl-[protein] + ADP + H(+). The enzyme catalyses L-threonyl-[protein] + ATP = O-phospho-L-threonyl-[protein] + ADP + H(+). Its function is as follows. Mediates apoptosis and actin stress fiber dissolution. The protein is STE20-like serine/threonine-protein kinase (SLK) of Homo sapiens (Human).